The chain runs to 192 residues: Interferon epsilon (192 aa).

Residues 1–21 (MVHRQLPETVLLLLVSSTIFS) form the signal peptide. A disulfide bond links cysteine 52 and cysteine 162.

Belongs to the alpha/beta interferon family. As to expression, expressed at very high levels in uterus and, at much lower levels, in ovary and cervix. Very low levels, if any, in other organs. In the endometrium, expressed in the luminal and glandular epithelial cells (at protein level).

It localises to the secreted. Functionally, type I interferon required for maintaining basal levels of IFN-regulated genes, including 2'-5'-oligoadenylate synthetase, IRF7 and ISG15, in the female reproductive tract. Directly mediates protection against viral, including HSV-2, and bacterial, including Chlamydia muridarum, genital infections. The protein is Interferon epsilon (Ifne) of Mus musculus (Mouse).